A 172-amino-acid chain; its full sequence is Ribosome maturation factor RimM (172 aa).

One can recognise a PRC barrel domain in the interval 96–168 (EGEFYYHQII…RVDVELMEGL (73 aa)).

The protein belongs to the RimM family. In terms of assembly, binds ribosomal protein uS19.

The protein resides in the cytoplasm. Its function is as follows. An accessory protein needed during the final step in the assembly of 30S ribosomal subunit, possibly for assembly of the head region. Essential for efficient processing of 16S rRNA. May be needed both before and after RbfA during the maturation of 16S rRNA. It has affinity for free ribosomal 30S subunits but not for 70S ribosomes. This is Ribosome maturation factor RimM from Streptococcus pyogenes serotype M3 (strain ATCC BAA-595 / MGAS315).